Reading from the N-terminus, the 398-residue chain is Galactose-3-O-sulfotransferase 2 (398 aa).

The Cytoplasmic segment spans residues 1-11 (MLSALGGLQRC). The chain crosses the membrane as a helical; Signal-anchor for type II membrane protein span at residues 12–29 (FWAILLLALTVSLLAGFL). The Lumenal portion of the chain corresponds to 30-398 (HKDVRLLMPL…PPKNIPFLGA (369 aa)). N-linked (GlcNAc...) asparagine glycans are attached at residues N77, N133, N180, N288, N330, and N360.

This sequence belongs to the galactose-3-O-sulfotransferase family.

The protein localises to the golgi apparatus. Its subcellular location is the golgi stack membrane. Its pathway is protein modification; carbohydrate sulfation. Strongly inhibited by Cu(2+) and Zn(2+). Its function is as follows. Transfers a sulfate group to the hydroxyl group at C3 of non-reducing beta-galactosyl residues. Acts both on type 1 (Gal-beta-1,3-GlcNAc) and type 2 (Gal-beta-1,4-GlcNAc) chains with similar efficiency. The polypeptide is Galactose-3-O-sulfotransferase 2 (GAL3ST2) (Sus scrofa (Pig)).